We begin with the raw amino-acid sequence, 185 residues long: Elongation factor P 1 (185 aa).

The protein belongs to the elongation factor P family.

It localises to the cytoplasm. Its pathway is protein biosynthesis; polypeptide chain elongation. In terms of biological role, involved in peptide bond synthesis. Stimulates efficient translation and peptide-bond synthesis on native or reconstituted 70S ribosomes in vitro. Probably functions indirectly by altering the affinity of the ribosome for aminoacyl-tRNA, thus increasing their reactivity as acceptors for peptidyl transferase. The polypeptide is Elongation factor P 1 (efp1) (Chlamydia pneumoniae (Chlamydophila pneumoniae)).